We begin with the raw amino-acid sequence, 184 residues long: ATP synthase subunit delta (184 aa).

This sequence belongs to the ATPase delta chain family. In terms of assembly, F-type ATPases have 2 components, F(1) - the catalytic core - and F(0) - the membrane proton channel. F(1) has five subunits: alpha(3), beta(3), gamma(1), delta(1), epsilon(1). F(0) has three main subunits: a(1), b(2) and c(10-14). The alpha and beta chains form an alternating ring which encloses part of the gamma chain. F(1) is attached to F(0) by a central stalk formed by the gamma and epsilon chains, while a peripheral stalk is formed by the delta and b chains.

It is found in the cell inner membrane. Functionally, f(1)F(0) ATP synthase produces ATP from ADP in the presence of a proton or sodium gradient. F-type ATPases consist of two structural domains, F(1) containing the extramembraneous catalytic core and F(0) containing the membrane proton channel, linked together by a central stalk and a peripheral stalk. During catalysis, ATP synthesis in the catalytic domain of F(1) is coupled via a rotary mechanism of the central stalk subunits to proton translocation. Its function is as follows. This protein is part of the stalk that links CF(0) to CF(1). It either transmits conformational changes from CF(0) to CF(1) or is implicated in proton conduction. The polypeptide is ATP synthase subunit delta (Rickettsia peacockii (strain Rustic)).